Reading from the N-terminus, the 373-residue chain is Glutamate 5-kinase (373 aa).

ATP is bound at residue lysine 12. Substrate-binding residues include serine 52, aspartate 139, and asparagine 154. 216–222 (TGGMVTK) provides a ligand contact to ATP. The 79-residue stretch at 281–359 (RGSICVDDGA…QELNAVLGGN (79 aa)) folds into the PUA domain.

This sequence belongs to the glutamate 5-kinase family.

Its subcellular location is the cytoplasm. The enzyme catalyses L-glutamate + ATP = L-glutamyl 5-phosphate + ADP. It participates in amino-acid biosynthesis; L-proline biosynthesis; L-glutamate 5-semialdehyde from L-glutamate: step 1/2. Its function is as follows. Catalyzes the transfer of a phosphate group to glutamate to form L-glutamate 5-phosphate. This chain is Glutamate 5-kinase, found in Dehalococcoides mccartyi (strain CBDB1).